The following is a 559-amino-acid chain: Berberine bridge enzyme-like A (559 aa).

The first 21 residues, 1-21, serve as a signal peptide directing secretion; sequence MFPLIILISFSLASLSETATG. 2 N-linked (GlcNAc...) asparagine glycosylation sites follow: asparagine 25 and asparagine 37. Cysteine 29 and cysteine 86 are oxidised to a cystine. The FAD-binding PCMH-type domain maps to 64-240; the sequence is FMPKPTFIIL…YAWKIRLLKV (177 aa). Pros-8alpha-FAD histidine is present on histidine 101. Residues asparagine 321, asparagine 355, and asparagine 494 are each glycosylated (N-linked (GlcNAc...) asparagine).

It belongs to the oxygen-dependent FAD-linked oxidoreductase family. It depends on FAD as a cofactor. As to expression, mostly expressed in roots.

The protein localises to the vacuole. It functions in the pathway alkaloid biosynthesis; nicotine biosynthesis. Its function is as follows. Involved in the biosynthesis of pyridine alkaloid natural products, leading mainly to the production of anabasine, anatabine, nicotine and nornicotine, effective deterrents against herbivores with antiparasitic and pesticide properties (neurotoxins); nornicotine serves as the precursor in the synthesis of the carcinogen compound N'-nitrosonornicotine (NNN). Catalyzes a late oxidation step subsequent to the pyridine ring condensation reaction in the biosynthesis of alkaloids. This chain is Berberine bridge enzyme-like A, found in Nicotiana tabacum (Common tobacco).